Consider the following 262-residue polypeptide: Tetrahydromethanopterin S-methyltransferase subunit C (262 aa).

7 consecutive transmembrane segments (helical) span residues 27–47 (LVGIYIAHFFPSLAMLLGGLL), 72–92 (PSIGMVSLGMGTISALAGVLI), 98–118 (LPVLVTPILAAVIAVVVGFIV), 145–165 (ALAILGFCTAFAGGFSADIII), 173–193 (VIALAFIAAGMAILHPFNACI), 200–220 (KRTMTLAVACGFMAWLVFAIA), and 222–242 (LDIVSTAVAAIFWFIAYGTFV).

The protein belongs to the MtrC family. As to quaternary structure, the complex is composed of 8 subunits; MtrA, MtrB, MtrC, MtrD, MtrE, MtrF, MtrG and MtrH.

The protein resides in the cell membrane. It catalyses the reaction 5-methyl-5,6,7,8-tetrahydromethanopterin + coenzyme M + 2 Na(+)(in) = 5,6,7,8-tetrahydromethanopterin + methyl-coenzyme M + 2 Na(+)(out). Its pathway is one-carbon metabolism; methanogenesis from CO(2); methyl-coenzyme M from 5,10-methylene-5,6,7,8-tetrahydromethanopterin: step 2/2. Its function is as follows. Part of a complex that catalyzes the formation of methyl-coenzyme M and tetrahydromethanopterin from coenzyme M and methyl-tetrahydromethanopterin. This is an energy-conserving, sodium-ion translocating step. In Methanococcus maripaludis (strain C5 / ATCC BAA-1333), this protein is Tetrahydromethanopterin S-methyltransferase subunit C.